The chain runs to 261 residues: Indole-3-glycerol phosphate synthase (261 aa).

Belongs to the TrpC family.

It carries out the reaction 1-(2-carboxyphenylamino)-1-deoxy-D-ribulose 5-phosphate + H(+) = (1S,2R)-1-C-(indol-3-yl)glycerol 3-phosphate + CO2 + H2O. The protein operates within amino-acid biosynthesis; L-tryptophan biosynthesis; L-tryptophan from chorismate: step 4/5. The protein is Indole-3-glycerol phosphate synthase of Burkholderia pseudomallei (strain 668).